We begin with the raw amino-acid sequence, 71 residues long: Movement protein TGBp3 (71 aa).

Over 1-4 (MWSD) the chain is Lumenal. A helical transmembrane segment spans residues 5-27 (SLVSRICVPIIVVCTSIALLNVV). The Cytoplasmic portion of the chain corresponds to 28 to 71 (SFRSECSCVVHISGAAIDIRGCSFTPDFIEYAKTLRVFNHRYQE).

Belongs to the Tymovirales TGBp3 protein family.

It localises to the host endoplasmic reticulum membrane. Its function is as follows. Plays a role in viral cell-to-cell propagation, by facilitating genome transport to neighboring plant cells through plasmosdesmata. May induce the formation of granular vesicles derived from the Endoplasmic reticulum, which align on actin filaments. The chain is Movement protein TGBp3 from Populus balsamifera (Balsam poplar).